The chain runs to 165 residues: Fibrinogen-binding protein (165 aa).

An N-terminal signal peptide occupies residues methionine 1–alanine 29.

In terms of assembly, interacts with host fibrinogen alpha chain/FGA. Interacts with host complement protein C3.

The protein localises to the secreted. Extracellular fibrinogen-binding protein that plays an important role in virulence. By interacting with the alpha chain of fibrinogen and its derivative fibrin, enhances a non-functional interaction between fibrinogen and platelets and is responsible for repression of fibrinogen-dependent platelet aggregation. In addition, assembles a fibrinogen protective shield around the bacteria which results in impaired phagocytic clearance by the host. Mechanistically, interacts with host complement C3b deposited on the surface of the bacterium via its C-terminal and then recruits fibrinogen via its N-terminal. In Staphylococcus aureus (strain Newman), this protein is Fibrinogen-binding protein (fib).